We begin with the raw amino-acid sequence, 947 residues long: Bifunctional glutamine synthetase adenylyltransferase/adenylyl-removing enzyme (947 aa).

Positions 1–440 (MTPLSSPLSQ…VFNELIGDDE (440 aa)) are adenylyl removase. Positions 450-947 (SEPWREVWQD…ASWRKWLVAV (498 aa)) are adenylyl transferase.

This sequence belongs to the GlnE family. It depends on Mg(2+) as a cofactor.

It catalyses the reaction [glutamine synthetase]-O(4)-(5'-adenylyl)-L-tyrosine + phosphate = [glutamine synthetase]-L-tyrosine + ADP. It carries out the reaction [glutamine synthetase]-L-tyrosine + ATP = [glutamine synthetase]-O(4)-(5'-adenylyl)-L-tyrosine + diphosphate. In terms of biological role, involved in the regulation of glutamine synthetase GlnA, a key enzyme in the process to assimilate ammonia. When cellular nitrogen levels are high, the C-terminal adenylyl transferase (AT) inactivates GlnA by covalent transfer of an adenylyl group from ATP to specific tyrosine residue of GlnA, thus reducing its activity. Conversely, when nitrogen levels are low, the N-terminal adenylyl removase (AR) activates GlnA by removing the adenylyl group by phosphorolysis, increasing its activity. The regulatory region of GlnE binds the signal transduction protein PII (GlnB) which indicates the nitrogen status of the cell. The polypeptide is Bifunctional glutamine synthetase adenylyltransferase/adenylyl-removing enzyme (Salmonella typhimurium (strain LT2 / SGSC1412 / ATCC 700720)).